Here is a 533-residue protein sequence, read N- to C-terminus: Dipeptide-binding protein (533 aa).

The N-terminal stretch at methionine 1–alanine 24 is a signal peptide.

It belongs to the bacterial solute-binding protein 5 family.

It localises to the periplasm. Functionally, binds different dipeptides. Probably bind only L-amino acid containing dipeptides. In Pseudomonas aeruginosa (strain ATCC 15692 / DSM 22644 / CIP 104116 / JCM 14847 / LMG 12228 / 1C / PRS 101 / PAO1), this protein is Dipeptide-binding protein.